A 292-amino-acid chain; its full sequence is Histamine N-methyltransferase (292 aa).

Position 28 (Glu28) interacts with substrate. S-adenosyl-L-methionine contacts are provided by Gly60, Glu89, Gln94, Ser120, and Ile142. Asn283 contacts substrate.

It belongs to the class I-like SAM-binding methyltransferase superfamily. HNMT family. As to quaternary structure, monomer.

It localises to the cytoplasm. It catalyses the reaction histamine + S-adenosyl-L-methionine = N(tau)-methylhistamine + S-adenosyl-L-homocysteine + H(+). Inactivates histamine by N-methylation. Plays an important role in degrading histamine and in regulating the airway response to histamine. This chain is Histamine N-methyltransferase (HNMT), found in Homo sapiens (Human).